Here is a 124-residue protein sequence, read N- to C-terminus: 5-hydroxyisourate hydrolase (124 aa).

Residues His-15, Arg-53, and Tyr-121 each coordinate substrate.

Belongs to the transthyretin family. 5-hydroxyisourate hydrolase subfamily. Homotetramer.

The catalysed reaction is 5-hydroxyisourate + H2O = 5-hydroxy-2-oxo-4-ureido-2,5-dihydro-1H-imidazole-5-carboxylate + H(+). Catalyzes the hydrolysis of 5-hydroxyisourate (HIU) to 2-oxo-4-hydroxy-4-carboxy-5-ureidoimidazoline (OHCU). The chain is 5-hydroxyisourate hydrolase from Mesorhizobium japonicum (strain LMG 29417 / CECT 9101 / MAFF 303099) (Mesorhizobium loti (strain MAFF 303099)).